Here is a 341-residue protein sequence, read N- to C-terminus: HTH-type transcriptional repressor PurR (341 aa).

In terms of domain architecture, HTH lacI-type spans 2–56 (ATIKDVAKRANVSTTTVSHVINKTRFVAEETRNAVWTAIKELHYSPSAVARSLKV). The segment at residues 4 to 23 (IKDVAKRANVSTTTVSHVIN) is a DNA-binding region (H-T-H motif). Residues 48–56 (SAVARSLKV) mediate DNA binding. Residues Y73, R190, T192, F221, and D275 each contribute to the hypoxanthine site.

Homodimer.

The protein operates within purine metabolism; purine nucleotide biosynthesis [regulation]. Functionally, is the main repressor of the genes involved in the de novo synthesis of purine nucleotides, regulating purB, purC, purEK, purF, purHD, purL, purMN and guaBA expression. PurR is allosterically activated to bind its cognate DNA by binding the purine corepressors, hypoxanthine or guanine, thereby effecting transcription repression. In Salmonella paratyphi A (strain ATCC 9150 / SARB42), this protein is HTH-type transcriptional repressor PurR.